The sequence spans 488 residues: Ribulose bisphosphate carboxylase large chain (488 aa).

Asn-127 and Thr-177 together coordinate substrate. Catalysis depends on Lys-179, which acts as the Proton acceptor. Lys-181 serves as a coordination point for substrate. Residues Lys-205, Asp-207, and Glu-208 each contribute to the Mg(2+) site. Lys-205 bears the N6-carboxylysine mark. Catalysis depends on His-297, which acts as the Proton acceptor. Residues Arg-298, His-330, and Ser-382 each coordinate substrate.

Belongs to the RuBisCO large chain family. Type I subfamily. As to quaternary structure, heterohexadecamer of 8 large chains and 8 small chains. Mg(2+) serves as cofactor.

The protein localises to the plastid. Its subcellular location is the chloroplast. The enzyme catalyses 2 (2R)-3-phosphoglycerate + 2 H(+) = D-ribulose 1,5-bisphosphate + CO2 + H2O. It catalyses the reaction D-ribulose 1,5-bisphosphate + O2 = 2-phosphoglycolate + (2R)-3-phosphoglycerate + 2 H(+). RuBisCO catalyzes two reactions: the carboxylation of D-ribulose 1,5-bisphosphate, the primary event in carbon dioxide fixation, as well as the oxidative fragmentation of the pentose substrate in the photorespiration process. Both reactions occur simultaneously and in competition at the same active site. The polypeptide is Ribulose bisphosphate carboxylase large chain (Pyropia suborbiculata (Red alga)).